Reading from the N-terminus, the 309-residue chain is Syndecan-1 (309 aa).

Positions 1–22 (MRRAALWLWLCALALRLQPVLP) are cleaved as a signal peptide. Residues 24-253 (IMAVNVPPED…GLLDRKEVLG (230 aa)) are Extracellular-facing. Disordered stretches follow at residues 28-57 (NVPPEDQDGSGDDSDNFSGSGTGALPDITL) and 142-185 (ARAT…GGTS). The span at 32-42 (EDQDGSGDDSD) shows a compositional bias: acidic residues. An O-linked (Xyl...) (chondroitin sulfate) serine glycan is attached at Ser37. Residue Asn43 is glycosylated (N-linked (GlcNAc...) asparagine). O-linked (Xyl...) (heparan sulfate) serine glycosylation is found at Ser45 and Ser47. The span at 142 to 151 (ARATTAQAPV) shows a compositional bias: polar residues. O-linked (Xyl...) (chondroitin sulfate) serine glycosylation is found at Ser205 and Ser215. The chain crosses the membrane as a helical span at residues 254 to 274 (GVIAGGLVGLIFAVCLVGFML). The Cytoplasmic portion of the chain corresponds to 275–309 (YRMKKKDEGSYSLEEPKQANGGAYQKPTKQEEFYA). The disordered stretch occupies residues 283 to 309 (GSYSLEEPKQANGGAYQKPTKQEEFYA). Phosphoserine is present on Ser284.

Belongs to the syndecan proteoglycan family. As to quaternary structure, interacts with CDCP1. Interacts (via C-terminus) with TIAM1 (via PDZ domain). Interacts with MDK. Post-translationally, shedding is enhanced by a number of factors such as heparanase, thrombin or EGF. Also by stress and wound healing. PMA-mediated shedding is inhibited by TIMP3.

Its subcellular location is the membrane. It is found in the secreted. The protein resides in the extracellular exosome. Its function is as follows. Cell surface proteoglycan that contains both heparan sulfate and chondroitin sulfate and that links the cytoskeleton to the interstitial matrix. Regulates exosome biogenesis in concert with SDCBP and PDCD6IP. Able to induce its own expression in dental mesenchymal cells and also in the neighboring dental epithelial cells via an MSX1-mediated pathway. The chain is Syndecan-1 from Cricetulus griseus (Chinese hamster).